The sequence spans 285 residues: HTH-type transcriptional regulator MurR (285 aa).

Residues 1–77 enclose the HTH rpiR-type domain; sequence MLYLTKISNA…MALIGEYSAS (77 aa). A DNA-binding region (H-T-H motif) is located at residues 37–56; the sequence is SRQMAKQLGISQSSIVKFAQ. Residues 128–279 form the SIS domain; sequence IIEVISKAPF…SLKMIQRSSE (152 aa).

As to quaternary structure, homotetramer.

The protein operates within amino-sugar metabolism; N-acetylmuramate degradation [regulation]. Its function is as follows. Represses the expression of the murPQ operon involved in the uptake and degradation of N-acetylmuramic acid (MurNAc). Binds to two adjacent inverted repeats within the operator region. MurNAc 6-phosphate, the substrate of MurQ, is the specific inducer that weakens binding of MurR to the operator. This chain is HTH-type transcriptional regulator MurR, found in Shigella boydii serotype 18 (strain CDC 3083-94 / BS512).